The following is a 147-amino-acid chain: Auxin-responsive protein SAUR41 (147 aa).

This sequence belongs to the ARG7 family. In terms of tissue distribution, specifically expressed in the quiescent center and cortex or endodermis initials of root stem niches. Expressed in vascular tissues from hypocotyls, petioles and cotyledons.

It localises to the cytoplasm. Functionally, plays a role in the regulation of cell expansion, root meristem patterning and auxin transport. The sequence is that of Auxin-responsive protein SAUR41 from Arabidopsis thaliana (Mouse-ear cress).